The chain runs to 1390 residues: Contactin (1390 aa).

A signal peptide spans 1 to 18; the sequence is MLAKIGLLASILVLNLVG. The segment at 25–67 is disordered; that stretch reads SENLPDPDPQSGQQPQNYQPSYNKDYSPRYNPLYTGQQSADPN. Positions 58–67 are enriched in polar residues; it reads YTGQQSADPN. Ig-like C2-type domains lie at 362 to 463, 468 to 561, 576 to 656, 661 to 745, 756 to 843, and 848 to 939; these read PYFV…AHLN, MEFN…LRVT, PKVF…IYIN, PQFT…TSFS, PSFK…ARVI, and IRFI…TSVS. A glycan (N-linked (GlcNAc...) asparagine) is linked at asparagine 369. 4 disulfide bridges follow: cysteine 388–cysteine 446, cysteine 489–cysteine 540, cysteine 593–cysteine 640, and cysteine 682–cysteine 734. Residues asparagine 537, asparagine 604, asparagine 629, asparagine 691, and asparagine 774 are each glycosylated (N-linked (GlcNAc...) asparagine). 2 disulfides stabilise this stretch: cysteine 779/cysteine 827 and cysteine 870/cysteine 923. Asparagine 912, asparagine 986, and asparagine 991 each carry an N-linked (GlcNAc...) asparagine glycan. 4 consecutive Fibronectin type-III domains span residues 946–1048, 1053–1151, 1156–1254, and 1259–1357; these read APGG…TYED, APRN…SAED, APQK…TYRK, and PPSS…MGKT. N-linked (GlcNAc...) asparagine glycosylation is found at asparagine 1166, asparagine 1171, and asparagine 1307. Alanine 1362 carries GPI-anchor amidated alanine lipidation. A propeptide spans 1363–1390 (removed in mature form); sequence NTRHGHNINTALILSTLLLISTFLYTSQ.

The protein belongs to the immunoglobulin superfamily. Contactin family. As to quaternary structure, forms a complex with Nrg and Nrx. Forms a complex composed of septa junction proteins Nrx-IV/Nrx, Tsf2/MTf, Cont and Nrg during late embryogenesis. Post-translationally, N-glycosylated. Expressed in ectodermally derived epithelial cells from stage 12. All these tissues, such as epidermis, hindgut, foregut, salivary glands and trachea, which contain pleated septate junctions. Expressed by ectodermally derived epithelial cells and along peripheral nerves. Not present in midline glial cells. Expressed in epithelial cells and glial cells of peripheral nerves.

It localises to the cell membrane. The protein localises to the cell junction. The protein resides in the septate junction. Required for organization of septate junctions and paracellular barrier functions. Septate junctions, which are the equivalent of vertebrates tight junctions, are characterized by regular arrays of transverse structures that span the intermembrane space and form a physical barrier to diffusion. The protein is Contactin (Cont) of Drosophila melanogaster (Fruit fly).